The sequence spans 449 residues: Secretin receptor (449 aa).

Residues 1-25 form the signal peptide; that stretch reads MLSTMRPRLSLLLLRLLLLTKAAHT. Over 26 to 141 the chain is Extracellular; the sequence is VGVPPRLCDV…NERRHAYLLK (116 aa). Intrachain disulfides connect Cys-46-Cys-75, Cys-66-Cys-107, and Cys-89-Cys-123. 4 N-linked (GlcNAc...) asparagine glycosylation sites follow: Asn-72, Asn-100, Asn-106, and Asn-128. A helical membrane pass occupies residues 142-167; sequence LKVMYTVGYSSSLAMLLVALSILCSF. Over 168 to 174 the chain is Cytoplasmic; that stretch reads RRLHCTR. Residues 175–195 traverse the membrane as a helical segment; the sequence is NYIHMHLFVSFILRALSNFIK. Over 196-216 the chain is Extracellular; that stretch reads DAVLFSSDDVTYCDAHKVGCK. Cys-215 and Cys-285 are oxidised to a cystine. A helical membrane pass occupies residues 217–239; it reads LVMIFFQYCIMANYAWLLVEGLY. Residues 240 to 254 lie on the Cytoplasmic side of the membrane; the sequence is LHTLLAISFFSERKY. Residues 255 to 276 traverse the membrane as a helical segment; sequence LQAFVLLGWGSPAIFVALWAIT. The Extracellular portion of the chain corresponds to 277–291; that stretch reads RHFLENTGCWDINAN. A glycan (N-linked (GlcNAc...) asparagine) is linked at Asn-291. The helical transmembrane segment at 292–315 threads the bilayer; sequence ASVWWVIRGPVILSILINFIFFIN. Over 316 to 340 the chain is Cytoplasmic; that stretch reads ILRILMRKLRTQETRGSETNHYKRL. The chain crosses the membrane as a helical span at residues 341-356; the sequence is AKSTLLLIPLFGIHYI. Topologically, residues 357–367 are extracellular; it reads VFAFSPEDAME. A helical transmembrane segment spans residues 368 to 391; the sequence is VQLFFELALGSFQGLVVAVLYCFL. Over 392–449 the chain is Cytoplasmic; it reads NGEVQLEVQKKWRQWHLQEFPLRPVAFNNSFSNATNGPTHSTKASTEQSRSIPRASII. Positions 425–442 are enriched in polar residues; the sequence is ATNGPTHSTKASTEQSRS. Positions 425–449 are disordered; the sequence is ATNGPTHSTKASTEQSRSIPRASII.

This sequence belongs to the G-protein coupled receptor 2 family. Post-translationally, phosphorylated on Ser and Thr residues at the cytoplasmic C-terminus by G protein-coupled receptor kinases (GRKs). N-glycosylated. In terms of tissue distribution, in the brain, expressed in the central amygdala, hippocampus, area postrema, nucleus of the tractus solitary and cerebellum.

It is found in the cell membrane. The protein localises to the basolateral cell membrane. Functionally, g protein-coupled receptor activated by secretin (SCT), which is involved in different processes such as regulation of the pH of the duodenal content, food intake and water homeostasis. Ligand binding causes a conformation change that triggers signaling via guanine nucleotide-binding proteins (G proteins) and activates cAMP-dependent pathway. Upon binding to secretin, regulates the pH of the duodenum by (1) inhibiting the secretion of gastric acid from the parietal cells of the stomach and (2) stimulating the production of bicarbonate (NaHCO(3)) from the ductal cells of the pancreas. In addition to regulating the pH of the duodenal content, plays a central role in diet induced thermogenesis: acts as a non-sympathetic brown fat (BAT) activator mediating prandial thermogenesis, which consequentially induces satiation. Mechanistically, secretin released by the gut after a meal binds to secretin receptor (SCTR) in brown adipocytes, activating brown fat thermogenesis by stimulating lipolysis, which is sensed in the brain and promotes satiation. Also able to stimulate lipolysis in white adipocytes. Also plays an important role in cellular osmoregulation by regulating renal water reabsorption. Also plays a role in the central nervous system: required for synaptic plasticity. This chain is Secretin receptor, found in Rattus norvegicus (Rat).